A 585-amino-acid chain; its full sequence is Organic cation transporter 1 (585 aa).

At Met-1–Gln-40 the chain is on the cytoplasmic side. Residues Ile-41–Asn-61 form a helical membrane-spanning segment. At Ile-62 to Glu-155 the chain is on the extracellular side. Residues Asn-87, Asn-98, and Asn-133 are each glycosylated (N-linked (GlcNAc...) asparagine). The helical transmembrane segment at Ile-156–Ala-176 threads the bilayer. Topologically, residues Asp-177 to Ser-184 are cytoplasmic. A helical membrane pass occupies residues Phe-185–Ile-205. Topologically, residues Glu-206–Arg-212 are extracellular. The helical transmembrane segment at Phe-213–Phe-233 threads the bilayer. Residues Met-234–Gly-243 lie on the Cytoplasmic side of the membrane. Residues Leu-244–Ile-264 form a helical membrane-spanning segment. Residues Arg-265 to Gln-269 are Extracellular-facing. The chain crosses the membrane as a helical span at residues Leu-270–Glu-290. Topologically, residues Ser-291–Thr-360 are cytoplasmic. A helical transmembrane segment spans residues Leu-361–Val-381. At Ser-382–Tyr-389 the chain is on the extracellular side. Residues Trp-390–Leu-410 form a helical membrane-spanning segment. The Cytoplasmic portion of the chain corresponds to Gln-411–Arg-416. A helical membrane pass occupies residues Trp-417 to Pro-437. The Extracellular portion of the chain corresponds to Asp-438–Ser-446. The chain crosses the membrane as a helical span at residues Ala-447–Gly-467. The Cytoplasmic segment spans residues Glu-468–Ala-476. Residues Ile-477 to Val-497 traverse the membrane as a helical segment. The Extracellular portion of the chain corresponds to Asn-498–Lys-504. A helical transmembrane segment spans residues Ile-505–Leu-525. Residues Pro-526–Ile-585 lie on the Cytoplasmic side of the membrane. Residues Gly-544–Ile-585 are disordered. Over residues Arg-575–Ile-585 the composition is skewed to basic residues.

This sequence belongs to the major facilitator (TC 2.A.1) superfamily. Organic cation transporter (TC 2.A.1.19) family.

The protein localises to the membrane. Functionally, transports organic cations such as tetraethylammonium (TEA). Displays a broad substrate specificity. The polypeptide is Organic cation transporter 1 (oct-1) (Caenorhabditis elegans).